A 135-amino-acid chain; its full sequence is UPF0102 protein Mjls_1965 (135 aa).

It belongs to the UPF0102 family.

This chain is UPF0102 protein Mjls_1965, found in Mycobacterium sp. (strain JLS).